Here is a 550-residue protein sequence, read N- to C-terminus: Chaperonin GroEL (550 aa).

ATP is bound by residues 30–33 (TLGP), Lys51, 87–91 (DGTTT), Gly415, and Asp496. A disordered region spans residues 526-550 (PEDEKMPPMPPGGGMGGMGGMGGMY). Over residues 537–550 (GGGMGGMGGMGGMY) the composition is skewed to gly residues.

It belongs to the chaperonin (HSP60) family. As to quaternary structure, forms a cylinder of 14 subunits composed of two heptameric rings stacked back-to-back. Interacts with the co-chaperonin GroES.

The protein resides in the cytoplasm. It carries out the reaction ATP + H2O + a folded polypeptide = ADP + phosphate + an unfolded polypeptide.. In terms of biological role, together with its co-chaperonin GroES, plays an essential role in assisting protein folding. The GroEL-GroES system forms a nano-cage that allows encapsulation of the non-native substrate proteins and provides a physical environment optimized to promote and accelerate protein folding. The sequence is that of Chaperonin GroEL from Chloroherpeton thalassium (strain ATCC 35110 / GB-78).